The sequence spans 952 residues: Valine--tRNA ligase (952 aa).

Positions 42-52 (PNVTGSLHMGH) match the 'HIGH' region motif. The 'KMSKS' region motif lies at 554-558 (KMSKS). An ATP-binding site is contributed by lysine 557. Residues 888 to 952 (AELARLDGEI…EEQKKTIAAL (65 aa)) adopt a coiled-coil conformation.

It belongs to the class-I aminoacyl-tRNA synthetase family. ValS type 1 subfamily. In terms of assembly, monomer.

The protein resides in the cytoplasm. The catalysed reaction is tRNA(Val) + L-valine + ATP = L-valyl-tRNA(Val) + AMP + diphosphate. In terms of biological role, catalyzes the attachment of valine to tRNA(Val). As ValRS can inadvertently accommodate and process structurally similar amino acids such as threonine, to avoid such errors, it has a 'posttransfer' editing activity that hydrolyzes mischarged Thr-tRNA(Val) in a tRNA-dependent manner. This is Valine--tRNA ligase from Vibrio parahaemolyticus serotype O3:K6 (strain RIMD 2210633).